Here is an 841-residue protein sequence, read N- to C-terminus: MSSKGGSSRLGSKDLKKMTSRTERELRDSGRVRGEVERVEKRLRATAKVKEQPPTGDYKRRALASPGETAAPTFLVDSRGIPRKTSSTAPRKATLRPASSSPRLASSSRPTESTLPSSSSRALQGASSSSSSRPRRLHESASGRGGSGGSAGELRQEKKRLPELEAAEAAPASCVVELRDVTARKGRTSPATPPETAGSSVCGQGSHARTAEKLEEGTASHRDGSRRGSVDAETWATPGDGSSSHEFESSPQREERMQPQETGRRELSSEPRSGDLTKNGGDGGPRRHSCAWRKWREHMIQSFDITTHPFPPRGDGSPRRGKFLMIFLTSSVLFFVFLQELVLNVTTFNGRCMSPVLYPSHDAPESERTPRVISFGYGACEHNLGVSLFRREETKKDPRGRWTPGPLTERCASGRCASDDGWPSDLVQRGRAQRSPAAFDSPNPRVFSSLGALDTNKVRNYGEMFRVVWGMFLHGGWMHLLLNVSCQAQTLWILEPAWGFLRTLSLWIVGGVSGSLLSAVANPCTVTVGSSGAFYGLLGALVPFSIEYWDHIASPAWFLFCVSVLVMVAQFGNMVGVQGVDNNAHLGGLIGGLLFGFATIRSVHAFRWQGVAERMASSTLFWWMFPAEKRRSLREDNLQRVAREREERSSGRIPPPKFVWKFRGHEREWCVRFAAAVGLVTFWSVLWLYLLVPSYYESLSSPPGNFSFLGSTGCHCCRVQPFPGEEDKLPAFHPVRVNRGLFWCFVSEGVANLFCGRSSALNRGADVYGQTRQFEEALGDLPSARAGEAPLRIAKEEGESASVWQRLVKSAKKTYNAVLGNTTTPAAPSAAELAQQTRAGQ.

Residues 1–10 (MSSKGGSSRL) show a composition bias toward low complexity. The disordered stretch occupies residues 1–289 (MSSKGGSSRL…GGDGGPRRHS (289 aa)). Positions 11–51 (GSKDLKKMTSRTERELRDSGRVRGEVERVEKRLRATAKVKE) are enriched in basic and acidic residues. The segment covering 95–132 (LRPASSSPRLASSSRPTESTLPSSSSRALQGASSSSSS) has biased composition (low complexity). Basic and acidic residues-rich tracts occupy residues 154 to 163 (LRQEKKRLPE), 209 to 230 (RTAE…RGSV), and 243 to 275 (SSHE…RSGD). 6 consecutive transmembrane segments (helical) span residues 323 to 343 (FLMI…ELVL), 464 to 484 (MFRV…LLNV), 492 to 512 (WILE…VGGV), 526 to 546 (VTVG…PFSI), 571 to 590 (FGNM…GGLI), and 673 to 693 (FAAA…LLVP). S531 functions as the Nucleophile in the catalytic mechanism. The active site involves H585.

It belongs to the peptidase S54 family.

Its subcellular location is the membrane. The enzyme catalyses Cleaves type-1 transmembrane domains using a catalytic dyad composed of serine and histidine that are contributed by different transmembrane domains.. Functionally, serine protease involved in intramembrane proteolysis. Cleaves microneme adhesins, such as MIC2. This step is essential for efficient invasion of host cells. Catalyzes intramembrane proteolysis of AMA1. This Toxoplasma gondii protein is Rhomboid-like protease 5 (ROM5).